The following is a 437-amino-acid chain: MKLSNLAALLSASTVAPVAAGYVSQDIIRADTMNVAVAAAANAQDEDLLEKIISSSPLLSLHRTICQVESVSNHESAVGEALIKYLGENGFATEKQMVPVDEDDDSTDKRFNIWAYPEGSPKPKIILTSHIDTVPPHIDYNLQAPEGDFDRANITIKGRGTVDAKASVAAMIIAALGHLKEHPDVPLGLLFVVSEEKGGTGMVHFSDSDLNTTPPFFHTLIFGEPTELKLVDGHKGNLRFDVEARGVSAHSGYPWLGHSAISEILPVLERIDKLGDIPVKDGGLPASEKYGRTTLNIGMLKGGAAGNVVPESASASVAVRLAAGTIEDAQNIIRKAVADACGGSKNITITFPDSKAYPPVDLDTDVDGFELLTVNYGTDIPKLDIHDEDSDVKVKRYLYGPGTILVAHGADEALTVGDLEKAVKGYAKLIDAAVRRG.

A signal peptide spans methionine 1 to alanine 20. An N-linked (GlcNAc...) asparagine glycan is attached at asparagine 153. Residue aspartate 163 coordinates Zn(2+). The active-site Proton acceptor is the glutamate 195. Residue glutamate 196 participates in Zn(2+) binding. An N-linked (GlcNAc...) asparagine glycan is attached at asparagine 346.

Belongs to the peptidase M20A family. It depends on Zn(2+) as a cofactor.

The protein resides in the secreted. The chain is Probable carboxypeptidase HCBG_00059 from Ajellomyces capsulatus (strain G186AR / H82 / ATCC MYA-2454 / RMSCC 2432) (Darling's disease fungus).